The chain runs to 167 residues: N-alpha-acetyltransferase (167 aa).

An N-acetyltransferase domain is found at 12–167 (YRIRNARLTD…EDAYLMAAPL (156 aa)). Y37 is a binding site for substrate. H88 serves as a coordination point for Zn(2+). Acetyl-CoA contacts are provided by residues 92–94 (IAV) and 100–105 (RLGIGT). E127 contributes to the Zn(2+) binding site. Acetyl-CoA-binding positions include N132 and 139-141 (YKK). Y154 contacts substrate.

Belongs to the acetyltransferase family. ARD1 subfamily. Homodimer.

The protein resides in the cytoplasm. The enzyme catalyses N-terminal L-alanyl-[protein] + acetyl-CoA = N-terminal N(alpha)-acetyl-L-alanyl-[protein] + CoA + H(+). It catalyses the reaction N-terminal L-seryl-[protein] + acetyl-CoA = N-terminal N(alpha)-acetyl-L-seryl-[protein] + CoA + H(+). The catalysed reaction is N-terminal L-methionyl-L-leucyl-[protein] + acetyl-CoA = N-terminal N(alpha)-acetyl-L-methionyl-L-leucyl-[protein] + CoA + H(+). It carries out the reaction N-terminal L-methionyl-L-glutamyl-[protein] + acetyl-CoA = N-terminal N(alpha)-acetyl-L-methionyl-L-glutamyl-[protein] + CoA + H(+). Displays alpha (N-terminal) acetyltransferase activity. Catalyzes the covalent attachment of an acetyl moiety from acetyl-CoA to the free alpha-amino group at the N-terminus of a protein. The chain is N-alpha-acetyltransferase from Sulfurisphaera tokodaii (strain DSM 16993 / JCM 10545 / NBRC 100140 / 7) (Sulfolobus tokodaii).